Consider the following 278-residue polypeptide: MADQYEKRITWTIKNFSSLQSHAIYFDIFVVGDTKWHLLAYPKGYGDSINKCLSLFLGVPDPDDLPSGWKRHIIYRLTVVNQMSEKLSKQEVARGGFYPRSLTFGSQVMLPLTELYGGFLVSGQVKIVAEVGVLEVVGKSDVLEETLLVNGGINVNGFQVLPSQVESVNNLFKNHPDIASNFRLENTHLRTTYLNSLLCLTELLCQSPHKLSNVDLANAHCTLTCVTKAGFKLDWLEKKLKEVGKTRMQQLEQNLKDLKESLCWSSDDEDDLSRSVKT.

The region spanning 6 to 131 (EKRITWTIKN…SGQVKIVAEV (126 aa)) is the MATH domain. The stretch at 232–267 (KLDWLEKKLKEVGKTRMQQLEQNLKDLKESLCWSSD) forms a coiled coil.

This Arabidopsis thaliana (Mouse-ear cress) protein is MATH domain and coiled-coil domain-containing protein At1g31400.